A 304-amino-acid chain; its full sequence is Acetylglutamate kinase (304 aa).

Substrate-binding positions include 75–76 (GG), Arg97, and Asn202.

It belongs to the acetylglutamate kinase family. ArgB subfamily.

It is found in the cytoplasm. It catalyses the reaction N-acetyl-L-glutamate + ATP = N-acetyl-L-glutamyl 5-phosphate + ADP. It participates in amino-acid biosynthesis; L-arginine biosynthesis; N(2)-acetyl-L-ornithine from L-glutamate: step 2/4. Its function is as follows. Catalyzes the ATP-dependent phosphorylation of N-acetyl-L-glutamate. This Parvibaculum lavamentivorans (strain DS-1 / DSM 13023 / NCIMB 13966) protein is Acetylglutamate kinase.